Consider the following 316-residue polypeptide: Sorting nexin-20 (316 aa).

Residues 1–57 form a disordered region; sequence MASHKHPGSPGWTGPICQDMAGTTPKASAPRPDLPRPGPEDHLEAQGSPSSNSSMTT. A Phosphoserine modification is found at serine 3. The span at 47–57 shows a compositional bias: polar residues; that stretch reads GSPSSNSSMTT. The region spanning 74–191 is the PX domain; it reads VKLLFEIASA…DFLTRPELKE (118 aa). 4 residues coordinate a 1,2-diacyl-sn-glycero-3-phospho-(1D-myo-inositol-3-phosphate): arginine 116, serine 118, lysine 143, and arginine 157.

Belongs to the sorting nexin family. In terms of assembly, interacts with SELPLG. Interaction with SELPLG is controversial.

The protein resides in the early endosome membrane. It is found in the cell membrane. Its subcellular location is the cytoplasm. The protein localises to the nucleus. Its function is as follows. May play a role in cellular vesicle trafficking. Has been proposed to function as a sorting protein that targets SELPLG into endosomes, but has no effect on SELPLG internalization from the cell surface, or on SELPLG-mediated cell-cell adhesion. This is Sorting nexin-20 (SNX20) from Bos taurus (Bovine).